Here is a 216-residue protein sequence, read N- to C-terminus: Invasion protein InvF (216 aa).

Residues 112-210 enclose the HTH araC/xylS-type domain; that stretch reads YWLVGYLLAQ…GVSPRKLSNI (99 aa). 2 consecutive DNA-binding regions (H-T-H motif) follow at residues 129–150 and 177–200; these read RMLG…SRAL and ITQL…KELI.

Transcriptional regulator required for the expression of several genes encoding type III secretion system SPI1 effector proteins. The interaction with SicA is necessary for the activation of sigDE (sopB pipC), sicAsipBCDA, and sopE. This Salmonella typhi protein is Invasion protein InvF (invF).